We begin with the raw amino-acid sequence, 259 residues long: Ribosomal RNA small subunit methyltransferase J (259 aa).

S-adenosyl-L-methionine contacts are provided by residues 101 to 102 (RD), 117 to 118 (ER), 153 to 154 (SS), and Asp176.

Belongs to the methyltransferase superfamily. RsmJ family.

Its subcellular location is the cytoplasm. The catalysed reaction is guanosine(1516) in 16S rRNA + S-adenosyl-L-methionine = N(2)-methylguanosine(1516) in 16S rRNA + S-adenosyl-L-homocysteine + H(+). Functionally, specifically methylates the guanosine in position 1516 of 16S rRNA. The protein is Ribosomal RNA small subunit methyltransferase J of Aliivibrio fischeri (strain ATCC 700601 / ES114) (Vibrio fischeri).